A 244-amino-acid polypeptide reads, in one-letter code: Putative quercetin 2,3-dioxygenase Mb0187c (244 aa).

Positions 60, 62, 104, and 106 each coordinate a divalent metal cation.

This sequence belongs to the pirin family. Requires a divalent metal cation as cofactor.

It catalyses the reaction quercetin + O2 = 2-(3,4-dihydroxybenzoyloxy)-4,6-dihydroxybenzoate + CO. The protein operates within flavonoid metabolism; quercetin degradation. Functionally, putative quercetin 2,3-dioxygenase. The sequence is that of Putative quercetin 2,3-dioxygenase Mb0187c from Mycobacterium bovis (strain ATCC BAA-935 / AF2122/97).